We begin with the raw amino-acid sequence, 427 residues long: MSRSETLFANAQKHIPGGVNSPVRAFKSVGGTPLFFKHAEGAYVTDEDDKRYVDYVGSWGPMILGHSHPDVLDAVRKQLEHGLSYGAPTAMETEMADLVCAIVPSMEMVRMVSSGTEATMSAIRLARGFTGRDSIIKFEGCYHGHSDSLLVKAGSGLLTQGVPSSAGVPAAFAKHTLTLPFNDIAAVEQMLNEVGQDVACIIVEPVAGNMNCVPPAPGFLEGLREQCDKHGVVLIFDEVMTGFRVALGGAQAHYGVTPDLSTFGKIIGGGMPVGCFGGKREIMQHIAPLGPVYQAGTLSGNPLAMAAGLTTLRLISRPGFHAELTDYTTRLLDGLQQRADAAGIPFVTTQAGGMFGLYFSGADDIVTFDDVMGSDADLFKRFFHLMLEGGVYLAPSAFEAGFTSIAHGDAELKLTLDAAERAFAALK.

At Lys-265 the chain carries N6-(pyridoxal phosphate)lysine.

Belongs to the class-III pyridoxal-phosphate-dependent aminotransferase family. HemL subfamily. As to quaternary structure, homodimer. It depends on pyridoxal 5'-phosphate as a cofactor.

It is found in the cytoplasm. The enzyme catalyses (S)-4-amino-5-oxopentanoate = 5-aminolevulinate. Its pathway is porphyrin-containing compound metabolism; protoporphyrin-IX biosynthesis; 5-aminolevulinate from L-glutamyl-tRNA(Glu): step 2/2. This Pseudomonas fluorescens (strain SBW25) protein is Glutamate-1-semialdehyde 2,1-aminomutase.